A 315-amino-acid chain; its full sequence is Ankyrin repeat domain-containing protein 54 (315 aa).

Residues 1–49 form a disordered region; sequence MDGSSPLLAAAGSDGDRSSSEGEYTLAGGPSAGDTEKREGESPMEAAGA. ANK repeat units follow at residues 124 to 153, 157 to 186, 190 to 219, and 223 to 255; these read HAVKRLREAANSNDIDTVRRLLEDDTDPCA, KGRTALHFSSCNGNETIVQLLLSYGADPNQ, LGNTPLHLAACTNHVPVITTLLRGGARVDA, and AGRTPLHLARSKLNILQEGDSRSLETLRGEVTQ.

It is found in the nucleus. Its subcellular location is the cytoplasm. The protein resides in the midbody. In terms of biological role, plays an important role in regulating intracellular signaling events associated with erythroid terminal differentiation. The polypeptide is Ankyrin repeat domain-containing protein 54 (ankrd54) (Danio rerio (Zebrafish)).